We begin with the raw amino-acid sequence, 568 residues long: Periplasmic trehalase (568 aa).

Residues 1-39 (MPYATARSGDVMSSAAPPCCTSLLGLSLSMFVAPGTLTA) form the signal peptide. Substrate-binding positions include Arg-169, 176 to 177 (WD), Asn-213, 222 to 224 (RSQ), 294 to 296 (RPE), and Gly-327. Catalysis depends on proton donor/acceptor residues Asp-329 and Glu-511. Glu-526 is a binding site for substrate.

This sequence belongs to the glycosyl hydrolase 37 family.

It localises to the periplasm. It carries out the reaction alpha,alpha-trehalose + H2O = alpha-D-glucose + beta-D-glucose. In terms of biological role, provides the cells with the ability to utilize trehalose at high osmolarity by splitting it into glucose molecules that can subsequently be taken up by the phosphotransferase-mediated uptake system. The sequence is that of Periplasmic trehalase from Xanthomonas axonopodis pv. citri (strain 306).